The sequence spans 174 residues: Large ribosomal subunit protein uL18 (174 aa).

Belongs to the universal ribosomal protein uL18 family. In terms of assembly, part of the 50S ribosomal subunit. Contacts the 5S and 23S rRNAs.

This is one of the proteins that bind and probably mediate the attachment of the 5S RNA into the large ribosomal subunit, where it forms part of the central protuberance. This is Large ribosomal subunit protein uL18 from Methanosarcina acetivorans (strain ATCC 35395 / DSM 2834 / JCM 12185 / C2A).